A 214-amino-acid chain; its full sequence is NKG2-D type II integral membrane protein (214 aa).

The Cytoplasmic portion of the chain corresponds to 1-56 (MGWIRDRRSPSSMEIRELHNRDVINRGAFKSRQKRTQTLITSKCGENPSPFFLARS). A helical; Signal-anchor for type II membrane protein membrane pass occupies residues 57–77 (IAIAMGIRFIVMVMIYSGMII). Topologically, residues 78–214 (NLLFNQEAPS…NTYICMKRTV (137 aa)) are extracellular. 2 disulfides stabilise this stretch: cysteine 94-cysteine 103 and cysteine 97-cysteine 108. The region spanning 98–210 (PKNWICYRNS…CLTLNTYICM (113 aa)) is the C-type lectin domain. N-linked (GlcNAc...) asparagine glycosylation is found at asparagine 113, asparagine 129, asparagine 161, and asparagine 184. 2 cysteine pairs are disulfide-bonded: cysteine 125–cysteine 209 and cysteine 187–cysteine 201.

As to quaternary structure, homodimer; disulfide-linked. Heterohexamer composed of two subunits of KLRK1 and four subunits of HCST/DAP10. Interacts (via transmembrane domain) with HCST/DAP10 (via transmembrane domain); the interaction is required for KLRK1 NK cell surface and induces NK cell-mediated cytotoxicity. Can form disulfide-bonded heterodimer with CD94. Interacts with CEACAM1; recruits PTPN6 that dephosphorylates VAV1. As to expression, detected in peripheral blood leukocytes, macrophages, monocytes and natural killer cells.

Its subcellular location is the cell membrane. Functions as an activating and costimulatory receptor involved in immunosurveillance upon binding to various cellular stress-inducible ligands displayed at the surface of autologous tumor cells and virus-infected cells. Provides both stimulatory and costimulatory innate immune responses on activated killer (NK) cells, leading to cytotoxic activity. Acts as a costimulatory receptor for T-cell receptor (TCR) in CD8(+) T-cell-mediated adaptive immune responses by amplifying T-cell activation. Stimulates perforin-mediated elimination of ligand-expressing tumor cells. Signaling involves calcium influx, culminating in the expression of TNF-alpha. Participates in NK cell-mediated bone marrow graft rejection. May play a regulatory role in differentiation and survival of NK cells. Binds to ligands belonging to various subfamilies of MHC class I-related glycoproteins. This Sus scrofa (Pig) protein is NKG2-D type II integral membrane protein (KLRK1).